We begin with the raw amino-acid sequence, 327 residues long: uncharacterized protein (327 aa).

The first 23 residues, 1–23 (MGGGRLPPLWLPLLIAWSEWGNC), serve as a signal peptide directing secretion. Residues asparagine 144 and asparagine 239 are each glycosylated (N-linked (GlcNAc...) asparagine; by host). Residues 298 to 327 (EESEAAEETAAGEASAVAAAAVSEEEQRRE) form a disordered region. A compositionally biased stretch (low complexity) spans 305–319 (ETAAGEASAVAAAAV).

This is an uncharacterized protein from Human cytomegalovirus (strain AD169) (HHV-5).